The following is a 414-amino-acid chain: Serine hydroxymethyltransferase (414 aa).

(6S)-5,6,7,8-tetrahydrofolate contacts are provided by residues L118 and 122–124 (GHL). Residue K226 is modified to N6-(pyridoxal phosphate)lysine. Residue 353–355 (SPF) coordinates (6S)-5,6,7,8-tetrahydrofolate.

It belongs to the SHMT family. In terms of assembly, homodimer. It depends on pyridoxal 5'-phosphate as a cofactor.

It localises to the cytoplasm. It carries out the reaction (6R)-5,10-methylene-5,6,7,8-tetrahydrofolate + glycine + H2O = (6S)-5,6,7,8-tetrahydrofolate + L-serine. Its pathway is one-carbon metabolism; tetrahydrofolate interconversion. The protein operates within amino-acid biosynthesis; glycine biosynthesis; glycine from L-serine: step 1/1. Catalyzes the reversible interconversion of serine and glycine with tetrahydrofolate (THF) serving as the one-carbon carrier. This reaction serves as the major source of one-carbon groups required for the biosynthesis of purines, thymidylate, methionine, and other important biomolecules. Also exhibits THF-independent aldolase activity toward beta-hydroxyamino acids, producing glycine and aldehydes, via a retro-aldol mechanism. This chain is Serine hydroxymethyltransferase, found in Blochmanniella floridana.